A 1480-amino-acid polypeptide reads, in one-letter code: Cystic fibrosis transmembrane conductance regulator (1480 aa).

Residues 1–77 (MQRSPLEKAS…KLINALRRCF (77 aa)) lie on the Cytoplasmic side of the membrane. A helical transmembrane segment spans residues 78 to 98 (FWRFMFYGIFLYLGEVTKAVQ). One can recognise an ABC transmembrane type-1 1 domain in the interval 81-365 (FMFYGIFLYL…WAVQTWYDSL (285 aa)). The Extracellular segment spans residues 99–122 (PLLLGRIIASYDPDNKEERSIAIY). The helical transmembrane segment at 123 to 146 (LGIGLCLLFIVRTLLLHPAIFGLH) threads the bilayer. The Cytoplasmic portion of the chain corresponds to 147–195 (HIGMQMRIAMFSLIYKKTLKLSSRVLDKISIGQLVSLLSNNLNKFDEGL). A helical membrane pass occupies residues 196 to 216 (ALAHFVWIAPLQVALLMGLIW). Residues 217–222 (ELLQAS) are Extracellular-facing. The helical transmembrane segment at 223–243 (AFCGLGFLIVLALFQAGLGRM) threads the bilayer. Residues 244–298 (MMKYRDQRAGKISERLVITSEMIENIQSVKAYCWEEAMEKMIENLRQTELKLTRK) are Cytoplasmic-facing. Residues 299-319 (AAYVRYFNSSAFFFSGFFVVF) traverse the membrane as a helical segment. Topologically, residues 320 to 339 (LSVLPYALIKGIILRKIFTT) are extracellular. The chain crosses the membrane as a helical span at residues 340-358 (ISFCIVLRMAVTRQFPWAV). The Cytoplasmic portion of the chain corresponds to 359-858 (QTWYDSLGAI…YLRYITVHKS (500 aa)). ATP contacts are provided by residues Trp401, Ser434, 458–465 (GSTGAGKT), and Gln493. The 224-residue stretch at 423–646 (NGDDSLFFSN…QPDFSSKLMG (224 aa)) folds into the ABC transporter 1 domain. Residue Cys524 is the site of S-palmitoyl cysteine attachment. The residue at position 549 (Ser549) is a Phosphoserine. Residues 654 to 831 (SAERRNSILT…EEINEEDLKE (178 aa)) form a disordered R region region. Phosphoserine; by PKA occurs at positions 660 and 670. Ser686 carries the post-translational modification Phosphoserine; by PKC. Residue Lys688 forms a Glycyl lysine isopeptide (Lys-Gly) (interchain with G-Cter in ubiquitin) linkage. A phosphoserine; by PKA mark is found at Ser700 and Ser712. Residue Thr717 is modified to Phosphothreonine. Phosphoserine; by PKA occurs at positions 737, 753, and 768. Residue Ser790 is modified to Phosphoserine; by PKC. Ser795 and Ser813 each carry phosphoserine; by PKA. Residues 859-879 (LIFVLIWCLVIFLAEVAASLV) traverse the membrane as a helical segment. An ABC transmembrane type-1 2 domain is found at 859 to 1155 (LIFVLIWCLV…AVNSSIDVDS (297 aa)). At 880-918 (VLWLLGNTPLQDKGNSTHSRNNSYAVIITSTSSYYVFYI) the chain is on the extracellular side. Asn894 and Asn900 each carry an N-linked (GlcNAc...) asparagine glycan. Residues 919 to 939 (YVGVADTLLAMGFFRGLPLVH) traverse the membrane as a discontinuously helical segment. At 940–990 (TLITVSKILHHKMLHSVLQAPMSTLNTLKAGGILNRFSKDIAILDDLLPLT) the chain is on the cytoplasmic side. Residues 991–1011 (IFDFIQLLLIVIGAIAVVAVL) form a helical membrane-spanning segment. Over 1012-1013 (QP) the chain is Extracellular. A helical transmembrane segment spans residues 1014 to 1034 (YIFVATVPVIVAFIMLRAYFL). At 1035–1095 (QTSQQLKQLE…TANWFLYLST (61 aa)) the chain is on the cytoplasmic side. The helical transmembrane segment at 1096–1116 (LRWFQMRIEMIFVIFFIAVTF) threads the bilayer. Residues 1117-1130 (ISILTTGEGEGRVG) lie on the Extracellular side of the membrane. Residues 1131–1151 (IILTLAMNIMSTLQWAVNSSI) form a helical membrane-spanning segment. Residues 1152–1480 (DVDSLMRSVS…TEEEVQDTRL (329 aa)) are Cytoplasmic-facing. One can recognise an ABC transporter 2 domain in the interval 1210–1443 (MTVKDLTAKY…RSLFRQAISP (234 aa)). ATP-binding positions include Tyr1219 and 1244–1251 (GRTGSGKS). The tract at residues 1386-1480 (RTLKQAFADC…TEEEVQDTRL (95 aa)) is interaction with GORASP2. A lipid anchor (S-palmitoyl cysteine) is attached at Cys1395. Phosphoserine occurs at positions 1444 and 1456. The disordered stretch occupies residues 1452 to 1480 (HRNSSKCKSKPQIAALKEETEEEVQDTRL). The span at 1470–1480 (ETEEEVQDTRL) shows a compositional bias: acidic residues. The PDZ-binding signature appears at 1478 to 1480 (TRL).

Belongs to the ABC transporter superfamily. ABCC family. CFTR transporter (TC 3.A.1.202) subfamily. As to quaternary structure, monomer; does not require oligomerization for channel activity. May form oligomers in the membrane. Interacts with SLC26A3, SLC26A6 and SHANK2. Interacts with NHERF1 and MYO6. Interacts (via C-terminus) with GOPC (via PDZ domain); this promotes CFTR internalization and thereby decreases channel activity. Interacts with SLC4A7 through NHERF1. Found in a complex with MYO5B and RAB11A. Interacts with ANO1. Interacts with SLC26A8. Interacts with AHCYL1; the interaction increases CFTR activity. Interacts with CSE1L. The core-glycosylated form interacts with GORASP2 (via PDZ GRASP-type 1 domain) in respone to ER stress. Interacts with MARCHF2; the interaction leads to CFTR ubiqtuitination and degradation. Interacts with ADGRG2. In terms of processing, N-glycosylated. Post-translationally, phosphorylated; cAMP treatment promotes phosphorylation and activates the channel. Dephosphorylation decreases the ATPase activity (in vitro). Phosphorylation at PKA sites activates the channel. Phosphorylation at PKC sites enhances the response to phosphorylation by PKA. Phosphorylated by AMPK; this inhibits channel activity. Ubiquitinated, leading to its degradation in the lysosome. Deubiquitination by USP10 in early endosomes enhances its endocytic recycling to the cell membrane. Ubiquitinated by RNF185 during ER stress. Ubiquitinated by MARCHF2. As to expression, expressed in the respiratory airway, including bronchial epithelium, and in the female reproductive tract, including oviduct (at protein level). Detected in pancreatic intercalated ducts in the exocrine tissue, on epithelial cells in intralobular striated ducts in sublingual salivary glands, on apical membranes of crypt cells throughout the small and large intestine, and on the reabsorptive duct in eccrine sweat glands. Detected on the equatorial segment of the sperm head (at protein level). Detected in nasal and bronchial superficial epithelium. Expressed by the central cells on the sebaceous glands, dermal adipocytes and, at lower levels, by epithelial cells.

The protein resides in the apical cell membrane. It localises to the early endosome membrane. It is found in the cell membrane. Its subcellular location is the recycling endosome membrane. The protein localises to the endoplasmic reticulum membrane. The protein resides in the nucleus. It catalyses the reaction ATP + H2O + closed Cl(-) channel = ADP + phosphate + open Cl(-) channel.. The catalysed reaction is chloride(in) = chloride(out). The enzyme catalyses hydrogencarbonate(in) = hydrogencarbonate(out). It carries out the reaction ATP + H2O = ADP + phosphate + H(+). Epithelial ion channel that plays an important role in the regulation of epithelial ion and water transport and fluid homeostasis. Mediates the transport of chloride ions across the cell membrane. Possesses an intrinsic ATPase activity and utilizes ATP to gate its channel; the passive flow of anions through the channel is gated by cycles of ATP binding and hydrolysis by the ATP-binding domains. The ion channel is also permeable to HCO(3)(-); selectivity depends on the extracellular chloride concentration. In vitro, mediates ATP-dependent glutathione flux. Exerts its function also by modulating the activity of other ion channels and transporters. Plays an important role in airway fluid homeostasis. Contributes to the regulation of the pH and the ion content of the airway surface fluid layer and thereby plays an important role in defense against pathogens. Modulates the activity of the epithelial sodium channel (ENaC) complex, in part by regulating the cell surface expression of the ENaC complex. Inhibits the activity of the ENaC channel containing subunits SCNN1A, SCNN1B and SCNN1G. Inhibits the activity of the ENaC channel containing subunits SCNN1D, SCNN1B and SCNN1G, but not of the ENaC channel containing subunits SCNN1A, SCNN1B and SCNN1G. May regulate bicarbonate secretion and salvage in epithelial cells by regulating the transporter SLC4A7. Can inhibit the chloride channel activity of ANO1. Plays a role in the chloride and bicarbonate homeostasis during sperm epididymal maturation and capacitation. This chain is Cystic fibrosis transmembrane conductance regulator, found in Homo sapiens (Human).